Here is a 98-residue protein sequence, read N- to C-terminus: NADH-ubiquinone oxidoreductase chain 4L (98 aa).

3 consecutive transmembrane segments (helical) span residues 1 to 21 (MSLV…GLLM), 29 to 49 (ALLC…LTIL), and 61 to 81 (IILL…LVTI).

Belongs to the complex I subunit 4L family. Core subunit of respiratory chain NADH dehydrogenase (Complex I) which is composed of 45 different subunits.

Its subcellular location is the mitochondrion inner membrane. It catalyses the reaction a ubiquinone + NADH + 5 H(+)(in) = a ubiquinol + NAD(+) + 4 H(+)(out). In terms of biological role, core subunit of the mitochondrial membrane respiratory chain NADH dehydrogenase (Complex I) which catalyzes electron transfer from NADH through the respiratory chain, using ubiquinone as an electron acceptor. Part of the enzyme membrane arm which is embedded in the lipid bilayer and involved in proton translocation. The sequence is that of NADH-ubiquinone oxidoreductase chain 4L (MT-ND4L) from Ziphius cavirostris (Cuvier's beaked whale).